A 292-amino-acid chain; its full sequence is D-galactarolactone isomerase (292 aa).

The protein belongs to the metallo-dependent hydrolases superfamily. Requires Does not require a metal cofactor. as cofactor.

It carries out the reaction D-galactaro-1,5-lactone = D-galactaro-1,4-lactone. Its pathway is carbohydrate acid metabolism; D-galacturonate degradation via prokaryotic oxidative pathway. Catalyzes the isomerization of D-galactaro-1,5-lactone to D-galactaro-1,4-lactone. This is a step in the oxidative degradation pathway of D-galacturonate, which allows A.tumefaciens to utilize D-galacturonate as a sole carbon source. This Agrobacterium fabrum (strain C58 / ATCC 33970) (Agrobacterium tumefaciens (strain C58)) protein is D-galactarolactone isomerase.